Reading from the N-terminus, the 64-residue chain is Cytochrome b-c1 complex subunit 9 (64 aa).

Over 2 to 18 (SSPTIPSRLYSLLFRRT) the chain is Mitochondrial matrix. Residues 19–43 (STFALTIAVGALFFERAFDQGADAI) traverse the membrane as a helical segment. Topologically, residues 44–63 (YEHINEGKLWKHIKHKYENK) are mitochondrial intermembrane.

Belongs to the UQCR10/QCR9 family. Component of the ubiquinol-cytochrome c oxidoreductase (cytochrome b-c1 complex, complex III, CIII), a multisubunit enzyme composed of 11 subunits. The complex is composed of 3 respiratory subunits cytochrome b, cytochrome c1 and Rieske protein UQCRFS1, 2 core protein subunits UQCRC1/QCR1 and UQCRC2/QCR2, and 6 low-molecular weight protein subunits UQCRH/QCR6, UQCRB/QCR7, UQCRQ/QCR8, UQCR10/QCR9, UQCR11/QCR10 and subunit 9, the cleavage product of Rieske protein UQCRFS1. The complex exists as an obligatory dimer and forms supercomplexes (SCs) in the inner mitochondrial membrane with NADH-ubiquinone oxidoreductase (complex I, CI) and cytochrome c oxidase (complex IV, CIV), resulting in different assemblies (supercomplex SCI(1)III(2)IV(1) and megacomplex MCI(2)III(2)IV(2)). Interacts with STMP1.

The protein resides in the mitochondrion inner membrane. In terms of biological role, component of the ubiquinol-cytochrome c oxidoreductase, a multisubunit transmembrane complex that is part of the mitochondrial electron transport chain which drives oxidative phosphorylation. The respiratory chain contains 3 multisubunit complexes succinate dehydrogenase (complex II, CII), ubiquinol-cytochrome c oxidoreductase (cytochrome b-c1 complex, complex III, CIII) and cytochrome c oxidase (complex IV, CIV), that cooperate to transfer electrons derived from NADH and succinate to molecular oxygen, creating an electrochemical gradient over the inner membrane that drives transmembrane transport and the ATP synthase. The cytochrome b-c1 complex catalyzes electron transfer from ubiquinol to cytochrome c, linking this redox reaction to translocation of protons across the mitochondrial inner membrane, with protons being carried across the membrane as hydrogens on the quinol. In the process called Q cycle, 2 protons are consumed from the matrix, 4 protons are released into the intermembrane space and 2 electrons are passed to cytochrome c. The polypeptide is Cytochrome b-c1 complex subunit 9 (Uqcr10) (Mus musculus (Mouse)).